Reading from the N-terminus, the 511-residue chain is Maturase K (511 aa).

This sequence belongs to the intron maturase 2 family. MatK subfamily.

Its subcellular location is the plastid. The protein resides in the chloroplast. Its function is as follows. Usually encoded in the trnK tRNA gene intron. Probably assists in splicing its own and other chloroplast group II introns. The polypeptide is Maturase K (Paulownia tomentosa (Princess tree)).